The primary structure comprises 341 residues: NADH-quinone oxidoreductase subunit H (341 aa).

Helical transmembrane passes span 4-24 (LVNI…LTYF), 38-58 (PSVV…KLLI), 70-90 (ILFI…WAVI), 115-135 (VGVL…IIAG), 161-181 (IGLI…GEMV), 187-207 (MPFW…ISLL), 239-259 (LFFL…TIFF), 275-295 (IPGL…FIWI), and 314-334 (VFLP…LFTG).

Belongs to the complex I subunit 1 family. In terms of assembly, NDH-1 is composed of 14 different subunits. Subunits NuoA, H, J, K, L, M, N constitute the membrane sector of the complex.

The protein resides in the cell membrane. It catalyses the reaction a quinone + NADH + 5 H(+)(in) = a quinol + NAD(+) + 4 H(+)(out). In terms of biological role, NDH-1 shuttles electrons from NADH, via FMN and iron-sulfur (Fe-S) centers, to quinones in the respiratory chain. The immediate electron acceptor for the enzyme in this species is believed to be ubiquinone. Couples the redox reaction to proton translocation (for every two electrons transferred, four hydrogen ions are translocated across the cytoplasmic membrane), and thus conserves the redox energy in a proton gradient. This subunit may bind ubiquinone. The chain is NADH-quinone oxidoreductase subunit H from Wolbachia pipientis wMel.